A 408-amino-acid chain; its full sequence is Argininosuccinate synthase (408 aa).

ATP-binding positions include 14–22 (AYSGGLDTS) and Ala41. L-citrulline-binding residues include Tyr92 and Ser97. Gly122 is a binding site for ATP. Residues Thr124, Asn128, and Asp129 each coordinate L-aspartate. An L-citrulline-binding site is contributed by Asn128. L-citrulline is bound by residues Arg132, Ser181, Ser190, Glu266, and Tyr278.

It belongs to the argininosuccinate synthase family. Type 1 subfamily. Homotetramer.

It localises to the cytoplasm. The catalysed reaction is L-citrulline + L-aspartate + ATP = 2-(N(omega)-L-arginino)succinate + AMP + diphosphate + H(+). Its pathway is amino-acid biosynthesis; L-arginine biosynthesis; L-arginine from L-ornithine and carbamoyl phosphate: step 2/3. The sequence is that of Argininosuccinate synthase from Pelobacter propionicus (strain DSM 2379 / NBRC 103807 / OttBd1).